A 367-amino-acid polypeptide reads, in one-letter code: Palmitoyltransferase ZDHHC2 (367 aa).

Residues M1–R16 are Cytoplasmic-facing. The chain crosses the membrane as a helical span at residues V17–Y37. Over A38–V54 the chain is Lumenal. The chain crosses the membrane as a helical span at residues C55 to F75. Residues T76–K170 lie on the Cytoplasmic side of the membrane. One can recognise a DHHC domain in the interval R127 to A177. The S-palmitoyl cysteine intermediate role is filled by C157. The helical transmembrane segment at F171–L191 threads the bilayer. The Lumenal portion of the chain corresponds to Q192–K208. The helical transmembrane segment at F209–F229 threads the bilayer. Residues G230–T367 lie on the Cytoplasmic side of the membrane. Positions N299–T367 are mediates localization to plasma membrane and recycling endosomes. Residues E330–T367 are disordered. Over residues S333 to N348 the composition is skewed to polar residues. The short motif at L335–L336 is the Non-canonical dileucine endocytic signal element. The residue at position 341 (S341) is a Phosphoserine. The NPxY-like endocytic signal motif lies at N358 to L361.

Belongs to the DHHC palmitoyltransferase family. In terms of assembly, monomer. Homodimer. The monomeric form has a higher catalytic activity. Autopalmitoylated. As to expression, ubiquitously expressed. Reduced expression in colorectal cancers with liver metastasis.

The protein resides in the postsynaptic density. It localises to the postsynaptic recycling endosome membrane. Its subcellular location is the cell membrane. The protein localises to the endoplasmic reticulum membrane. It is found in the golgi apparatus membrane. The catalysed reaction is L-cysteinyl-[protein] + hexadecanoyl-CoA = S-hexadecanoyl-L-cysteinyl-[protein] + CoA. It carries out the reaction L-cysteinyl-[protein] + tetradecanoyl-CoA = S-tetradecanoyl-L-cysteinyl-[protein] + CoA. The enzyme catalyses L-cysteinyl-[protein] + octadecanoyl-CoA = S-octadecanoyl-L-cysteinyl-[protein] + CoA. Functionally, palmitoyltransferase that catalyzes the addition of palmitate onto various protein substrates and is involved in a variety of cellular processes. Has no stringent fatty acid selectivity and in addition to palmitate can also transfer onto target proteins myristate from tetradecanoyl-CoA and stearate from octadecanoyl-CoA. In the nervous system, plays a role in long term synaptic potentiation by palmitoylating AKAP5 through which it regulates protein trafficking from the dendritic recycling endosomes to the plasma membrane and controls both structural and functional plasticity at excitatory synapses. In dendrites, mediates the palmitoylation of DLG4 when synaptic activity decreases and induces synaptic clustering of DLG4 and associated AMPA-type glutamate receptors. Also mediates the de novo and turnover palmitoylation of RGS7BP, a shuttle for Gi/o-specific GTPase-activating proteins/GAPs, promoting its localization to the plasma membrane in response to the activation of G protein-coupled receptors. Through the localization of these GTPase-activating proteins/GAPs, it also probably plays a role in G protein-coupled receptors signaling in neurons. Also probably plays a role in cell adhesion by palmitoylating CD9 and CD151 to regulate their expression and function. Palmitoylates the endoplasmic reticulum protein CKAP4 and regulates its localization to the plasma membrane. Could also palmitoylate LCK and regulate its localization to the plasma membrane. (Microbial infection) Promotes Chikungunya virus (CHIKV) replication by mediating viral nsp1 palmitoylation. This is Palmitoyltransferase ZDHHC2 from Homo sapiens (Human).